Reading from the N-terminus, the 584-residue chain is Isocitrate dehydrogenase kinase/phosphatase (584 aa).

ATP is bound by residues 315 to 321 (APGVKGM) and Lys336. The active site involves Asp371.

It belongs to the AceK family.

Its subcellular location is the cytoplasm. The catalysed reaction is L-seryl-[isocitrate dehydrogenase] + ATP = O-phospho-L-seryl-[isocitrate dehydrogenase] + ADP + H(+). In terms of biological role, bifunctional enzyme which can phosphorylate or dephosphorylate isocitrate dehydrogenase (IDH) on a specific serine residue. This is a regulatory mechanism which enables bacteria to bypass the Krebs cycle via the glyoxylate shunt in response to the source of carbon. When bacteria are grown on glucose, IDH is fully active and unphosphorylated, but when grown on acetate or ethanol, the activity of IDH declines drastically concomitant with its phosphorylation. In Serratia proteamaculans (strain 568), this protein is Isocitrate dehydrogenase kinase/phosphatase.